Reading from the N-terminus, the 345-residue chain is Large ribosomal subunit protein uL4 (345 aa).

Ala2 is subject to N-acetylalanine.

Belongs to the universal ribosomal protein uL4 family.

This Caenorhabditis elegans protein is Large ribosomal subunit protein uL4 (rpl-4).